We begin with the raw amino-acid sequence, 1405 residues long: Sterol 3-beta-glucosyltransferase (1405 aa).

Basic and acidic residues-rich tracts occupy residues 1-16 (MRPF…DRKL) and 95-105 (TGQRPRKESSV). Disordered stretches follow at residues 1-27 (MRPF…SASR), 83-186 (ARFD…SATP), and 203-230 (DLKA…ASVS). Polar residues predominate over residues 106–115 (RKGTSVSVNT). Positions 116–126 (SSLDPSQRSSS) are enriched in low complexity. Over residues 206-218 (ASSTERSQSSLNE) the composition is skewed to polar residues. Residues 246–285 (EKVLVEYACSLLQSMLLQGYMYVTEGHICFYAYLPKKSTV) form the GRAM 1 domain. A PH domain is found at 285-384 (VAIKSGYLHK…WVKALQKVIF (100 aa)). Disordered regions lie at residues 461 to 526 (SQHL…DSSD) and 566 to 642 (TIYG…SGAP). The segment covering 483 to 493 (RWSLTSGTSRA) has biased composition (polar residues). The segment covering 570-589 (LDRRPSGRERRGRRNSDETA) has biased composition (basic and acidic residues). Residues 590-603 (RSPSTRVNVGTGQQ) show a composition bias toward polar residues. The span at 606 to 624 (ELDRRTDGNTSGREARDTT) shows a compositional bias: basic and acidic residues. Over residues 626 to 642 (ESDQYTQDPTKSFSGAP) the composition is skewed to polar residues. The GRAM 2 domain occupies 724 to 790 (DRFRAHFALP…RDIENVEKEK (67 aa)). UDP-alpha-D-glucose-binding residues include Ser911, Arg912, Asp914, Ala1214, His1216, His1229, Gly1233, Thr1234, Asp1253, and Gln1254. The disordered stretch occupies residues 1330–1367 (SIASSTPFSPTPSAKTAAEQDADDDVEDSEEWTFVGDD). The span at 1332–1348 (ASSTPFSPTPSAKTAAE) shows a compositional bias: low complexity. The segment covering 1349–1367 (QDADDDVEDSEEWTFVGDD) has biased composition (acidic residues).

Belongs to the glycosyltransferase 28 family.

The protein localises to the cytoplasm. The protein resides in the preautophagosomal structure membrane. The catalysed reaction is a sterol + UDP-alpha-D-glucose = a sterol 3-beta-D-glucoside + UDP + H(+). The enzyme catalyses ergosterol + UDP-alpha-D-glucose = ergosteryl 3-beta-D-glucoside + UDP + H(+). Sterol glycosyltransferase responsible for the glycosylation of ergosterol to form ergosterol-glucoside. This chain is Sterol 3-beta-glucosyltransferase, found in Aspergillus fumigatus (strain ATCC MYA-4609 / CBS 101355 / FGSC A1100 / Af293) (Neosartorya fumigata).